A 299-amino-acid polypeptide reads, in one-letter code: GTPase Era (299 aa).

Residues 4 to 171 (KSGFVAILGR…VDILSENLDE (168 aa)) enclose the Era-type G domain. The segment at 12–19 (GRPNVGKS) is G1. GTP is bound at residue 12–19 (GRPNVGKS). The tract at residues 38 to 42 (QTTRN) is G2. Residues 59–62 (DTPG) form a G3 region. Residues 59-63 (DTPGI) and 121-124 (NKID) contribute to the GTP site. The segment at 121-124 (NKID) is G4. Residues 150–152 (ISA) form a G5 region. In terms of domain architecture, KH type-2 spans 202-280 (TREEIPHSVA…FLETWVKVKK (79 aa)).

It belongs to the TRAFAC class TrmE-Era-EngA-EngB-Septin-like GTPase superfamily. Era GTPase family. Monomer.

Its subcellular location is the cytoplasm. It localises to the cell membrane. Functionally, an essential GTPase that binds both GDP and GTP, with rapid nucleotide exchange. Plays a role in 16S rRNA processing and 30S ribosomal subunit biogenesis and possibly also in cell cycle regulation and energy metabolism. The protein is GTPase Era of Streptococcus pneumoniae (strain Hungary19A-6).